The primary structure comprises 249 residues: Very-long-chain (3R)-3-hydroxyacyl-CoA dehydratase 1 (249 aa).

The interval 1-22 is disordered; that stretch reads MASSEEDGTNGGASEAGEEKEA. The Cytoplasmic segment spans residues 1 to 36; sequence MASSEEDGTNGGASEAGEEKEAPGRRRRLGLLATVW. Residues 37–56 traverse the membrane as a helical segment; sequence LTFYNIAMTAGWLVLAIAMV. Residues 57 to 75 are Lumenal-facing; the sequence is RFYMEKGTHKGLYKSIQKT. A helical membrane pass occupies residues 76-92; that stretch reads LKFFQTFALLEIVHCLI. Topologically, residues 93–102 are cytoplasmic; it reads GIVPTSVIVA. The chain crosses the membrane as a helical span at residues 103–120; it reads GVQVSSRIFMVWLITHSI. Topologically, residues 121 to 126 are lumenal; that stretch reads KPIQNE. Residues 127-141 form a helical membrane-spanning segment; that stretch reads ESVVLFLVAWTVTEI. At 142-164 the chain is on the cytoplasmic side; sequence TRYSFYTFSLLDHLPYFIKWARY. The helical transmembrane segment at 165–182 threads the bilayer; that stretch reads NFFIILYPVGVVGELLTI. Active-site residues include tyrosine 171 and glutamate 178. The Lumenal portion of the chain corresponds to 183-212; the sequence is YAALPYVKKTGMFSIRLPNKYNVSFDYYYF. An N-linked (GlcNAc...) asparagine glycan is attached at asparagine 204. The chain crosses the membrane as a helical span at residues 213–230; the sequence is LLITMASYIPLFPQLYFH. Over 231–249 the chain is Cytoplasmic; that stretch reads MLRQRRKVLHGEVIVEKDD.

This sequence belongs to the very long-chain fatty acids dehydratase HACD family. As to quaternary structure, may interact with enzymes of the ELO family (including ELOVL1); with those enzymes that mediate condensation, the first of the four steps of the reaction cycle responsible for fatty acids elongation, may be part of a larger fatty acids elongase complex. Interacts with TECR. Skeletal muscle.

The protein localises to the endoplasmic reticulum membrane. It catalyses the reaction a very-long-chain (3R)-3-hydroxyacyl-CoA = a very-long-chain (2E)-enoyl-CoA + H2O. It carries out the reaction (3R)-hydroxyhexadecanoyl-CoA = (2E)-hexadecenoyl-CoA + H2O. The catalysed reaction is (3R)-hydroxyoctadecanoyl-CoA = (2E)-octadecenoyl-CoA + H2O. The enzyme catalyses (3R)-hydroxyeicosanoyl-CoA = (2E)-eicosenoyl-CoA + H2O. It catalyses the reaction (3R)-hydroxydocosanoyl-CoA = (2E)-docosenoyl-CoA + H2O. It carries out the reaction (3R)-hydroxytetracosanoyl-CoA = (2E)-tetracosenoyl-CoA + H2O. The catalysed reaction is (3R)-hydroxyhexacosanoyl-CoA = (2E)-hexacosenoyl-CoA + H2O. It functions in the pathway lipid metabolism; fatty acid biosynthesis. Its function is as follows. Catalyzes the third of the four reactions of the long-chain fatty acids elongation cycle. This endoplasmic reticulum-bound enzymatic process, allows the addition of two carbons to the chain of long- and very long-chain fatty acids/VLCFAs per cycle. This enzyme catalyzes the dehydration of the 3-hydroxyacyl-CoA intermediate into trans-2,3-enoyl-CoA, within each cycle of fatty acid elongation. Thereby, it participates in the production of VLCFAs of different chain lengths that are involved in multiple biological processes as precursors of membrane lipids and lipid mediators. This is Very-long-chain (3R)-3-hydroxyacyl-CoA dehydratase 1 (HACD1) from Canis lupus familiaris (Dog).